A 108-amino-acid polypeptide reads, in one-letter code: Urease subunit beta (108 aa).

Belongs to the urease beta subunit family. As to quaternary structure, heterotrimer of UreA (gamma), UreB (beta) and UreC (alpha) subunits. Three heterotrimers associate to form the active enzyme.

It is found in the cytoplasm. The catalysed reaction is urea + 2 H2O + H(+) = hydrogencarbonate + 2 NH4(+). It participates in nitrogen metabolism; urea degradation; CO(2) and NH(3) from urea (urease route): step 1/1. This chain is Urease subunit beta, found in Proteus hauseri.